Reading from the N-terminus, the 113-residue chain is Retrotransposon Gag-like protein 8B (113 aa).

It belongs to the FAM127 family.

In Homo sapiens (Human), this protein is Retrotransposon Gag-like protein 8B (RTL8B).